We begin with the raw amino-acid sequence, 422 residues long: Killer cell immunoglobulin-like receptor 3DL1 (422 aa).

A signal peptide spans 1-21 (MMFEFLSLLCSGFFLVQRMSA). The Extracellular portion of the chain corresponds to 22–329 (HMGSYDKPFL…KNLHIQIGLL (308 aa)). Ig-like C2-type domains follow at residues 42–100 (GQNV…HHQY), 135–202 (GENV…YNHS), and 237–300 (EQNM…FKNS). N-linked (GlcNAc...) asparagine glycosylation occurs at N44. An intrachain disulfide couples C49 to C95. N-linked (GlcNAc...) asparagine glycosylation occurs at N137. C142 and C195 are joined by a disulfide. N-linked (GlcNAc...) asparagine glycans are attached at residues N200 and N239. Residues C244 and C293 are joined by a disulfide bond. N-linked (GlcNAc...) asparagine glycosylation occurs at N299. A helical membrane pass occupies residues 330 to 350 (VTMVLVIVVIIIIIIIIIIII). The Cytoplasmic portion of the chain corresponds to 351–422 (YYYYFSKKSS…DTVVYTEVMI (72 aa)).

The protein belongs to the immunoglobulin superfamily.

The protein localises to the cell membrane. Functionally, receptor on natural killer (NK) cells. Inhibits the activity of NK cells thus preventing cell lysis. The chain is Killer cell immunoglobulin-like receptor 3DL1 (Kir3dl1) from Rattus norvegicus (Rat).